Reading from the N-terminus, the 1578-residue chain is Pentafunctional AROM polypeptide (1578 aa).

The tract at residues 1–393 is 3-dehydroquinate synthase; sequence MSVELAKVSI…YGTSAHVVSD (393 aa). Residues 44–46, 79–82, 110–112, and D115 each bind NAD(+); these read DTN, EAHK, and GGV. R126 is a binding site for 7-phospho-2-dehydro-3-deoxy-D-arabino-heptonate. 135–136 lines the NAD(+) pocket; the sequence is TS. D142 and K148 together coordinate 7-phospho-2-dehydro-3-deoxy-D-arabino-heptonate. K157 contacts NAD(+). Position 158 (N158) interacts with 7-phospho-2-dehydro-3-deoxy-D-arabino-heptonate. NAD(+) is bound by residues 175–178 and N186; that span reads WLET. Residue E190 coordinates Zn(2+). 7-phospho-2-dehydro-3-deoxy-D-arabino-heptonate is bound by residues 190 to 193 and K259; that span reads EVIK. E269 (proton acceptor; for 3-dehydroquinate synthase activity) is an active-site residue. Residues 273–277 and H280 contribute to the 7-phospho-2-dehydro-3-deoxy-D-arabino-heptonate site; that span reads RNLLN. Zn(2+) is bound at residue H280. The active-site Proton acceptor; for 3-dehydroquinate synthase activity is the H284. Residues H296 and K365 each coordinate 7-phospho-2-dehydro-3-deoxy-D-arabino-heptonate. H296 contributes to the Zn(2+) binding site. The EPSP synthase stretch occupies residues 406–863; the sequence is VHPFNNIPEG…WDVLHSQLGA (458 aa). The active-site For EPSP synthase activity is C845. The interval 882–1071 is shikimate kinase; the sequence is VVIIGMRAAG…VPSRRSAFVC (190 aa). ATP is bound at residue 886–893; sequence GMRAAGKS. The segment at 1072 to 1284 is 3-dehydroquinase; the sequence is LTFEDLSDHL…AAPGQLTLAE (213 aa). Catalysis depends on H1189, which acts as the Proton acceptor; for 3-dehydroquinate dehydratase activity. K1218 acts as the Schiff-base intermediate with substrate; for 3-dehydroquinate dehydratase activity in catalysis. Residues 1297–1578 are shikimate dehydrogenase; that stretch reads AKKFFVIGSP…KAIFDAVTQE (282 aa).

It in the N-terminal section; belongs to the sugar phosphate cyclases superfamily. Dehydroquinate synthase family. This sequence in the 2nd section; belongs to the EPSP synthase family. In the 3rd section; belongs to the shikimate kinase family. The protein in the 4th section; belongs to the type-I 3-dehydroquinase family. It in the C-terminal section; belongs to the shikimate dehydrogenase family. As to quaternary structure, homodimer. It depends on Zn(2+) as a cofactor.

Its subcellular location is the cytoplasm. The enzyme catalyses 7-phospho-2-dehydro-3-deoxy-D-arabino-heptonate = 3-dehydroquinate + phosphate. The catalysed reaction is 3-dehydroquinate = 3-dehydroshikimate + H2O. It carries out the reaction shikimate + NADP(+) = 3-dehydroshikimate + NADPH + H(+). It catalyses the reaction shikimate + ATP = 3-phosphoshikimate + ADP + H(+). The enzyme catalyses 3-phosphoshikimate + phosphoenolpyruvate = 5-O-(1-carboxyvinyl)-3-phosphoshikimate + phosphate. It participates in metabolic intermediate biosynthesis; chorismate biosynthesis; chorismate from D-erythrose 4-phosphate and phosphoenolpyruvate: step 2/7. It functions in the pathway metabolic intermediate biosynthesis; chorismate biosynthesis; chorismate from D-erythrose 4-phosphate and phosphoenolpyruvate: step 3/7. Its pathway is metabolic intermediate biosynthesis; chorismate biosynthesis; chorismate from D-erythrose 4-phosphate and phosphoenolpyruvate: step 4/7. The protein operates within metabolic intermediate biosynthesis; chorismate biosynthesis; chorismate from D-erythrose 4-phosphate and phosphoenolpyruvate: step 5/7. It participates in metabolic intermediate biosynthesis; chorismate biosynthesis; chorismate from D-erythrose 4-phosphate and phosphoenolpyruvate: step 6/7. Its function is as follows. The AROM polypeptide catalyzes 5 consecutive enzymatic reactions in prechorismate polyaromatic amino acid biosynthesis. The chain is Pentafunctional AROM polypeptide from Kluyveromyces lactis (strain ATCC 8585 / CBS 2359 / DSM 70799 / NBRC 1267 / NRRL Y-1140 / WM37) (Yeast).